The sequence spans 151 residues: Putative coiled-coil-helix-coiled-coil-helix domain-containing protein CHCHD2P9, mitochondrial (151 aa).

The N-terminal 9 residues, 1–9, are a transit peptide targeting the mitochondrion; that stretch reads MPRGSRSRT. Disordered regions lie at residues 1 to 50 and 75 to 110; these read MPRG…AAAP and TQGH…PAQQ. Positions 10–26 are enriched in low complexity; it reads SRMAPPASRAPQMRAAP. The segment covering 27 to 38 has biased composition (pro residues); sequence RPAPVAQPPAAA. 2 stretches are compositionally biased toward low complexity: residues 39–50 and 100–110; these read PPSAVGSSAAAP and QEPQGTQPAQQ. A CHCH domain is found at 111-151; it reads QQPCFYGIKQFLECAQNQGDIKLCEDFSKVLKQCRLAKGLA. 2 consecutive short sequence motifs (cx9C motif) follow at residues 114–124 and 134–144; these read CFYGIKQFLEC and CEDFSKVLKQC. Intrachain disulfides connect cysteine 114/cysteine 144 and cysteine 124/cysteine 134.

It is found in the mitochondrion. This Homo sapiens (Human) protein is Putative coiled-coil-helix-coiled-coil-helix domain-containing protein CHCHD2P9, mitochondrial (CHCHD2P9).